Consider the following 372-residue polypeptide: Chaperone protein DnaJ (372 aa).

Residues 5 to 69 (EFYDRLGVSK…QKRAAYDQYG (65 aa)) form the J domain. The CR-type zinc-finger motif lies at 129-211 (GTEKEVKYHR…CHGTGHEKQA (83 aa)). Cys-142, Cys-145, Cys-159, Cys-162, Cys-185, Cys-188, Cys-199, and Cys-202 together coordinate Zn(2+). 4 CXXCXGXG motif repeats span residues 142–149 (CRTCNGSG), 159–166 (CGRCHGAG), 185–192 (CDVCHGRG), and 199–206 (CTTCHGTG).

Belongs to the DnaJ family. Homodimer. The cofactor is Zn(2+).

The protein resides in the cytoplasm. Functionally, participates actively in the response to hyperosmotic and heat shock by preventing the aggregation of stress-denatured proteins and by disaggregating proteins, also in an autonomous, DnaK-independent fashion. Unfolded proteins bind initially to DnaJ; upon interaction with the DnaJ-bound protein, DnaK hydrolyzes its bound ATP, resulting in the formation of a stable complex. GrpE releases ADP from DnaK; ATP binding to DnaK triggers the release of the substrate protein, thus completing the reaction cycle. Several rounds of ATP-dependent interactions between DnaJ, DnaK and GrpE are required for fully efficient folding. Also involved, together with DnaK and GrpE, in the DNA replication of plasmids through activation of initiation proteins. The protein is Chaperone protein DnaJ of Streptococcus pneumoniae (strain ATCC BAA-255 / R6).